A 213-amino-acid chain; its full sequence is Probable transaldolase (213 aa).

The active-site Schiff-base intermediate with substrate is the Lys-83.

This sequence belongs to the transaldolase family. Type 3B subfamily.

It localises to the cytoplasm. The enzyme catalyses D-sedoheptulose 7-phosphate + D-glyceraldehyde 3-phosphate = D-erythrose 4-phosphate + beta-D-fructose 6-phosphate. It participates in carbohydrate degradation; pentose phosphate pathway; D-glyceraldehyde 3-phosphate and beta-D-fructose 6-phosphate from D-ribose 5-phosphate and D-xylulose 5-phosphate (non-oxidative stage): step 2/3. Functionally, transaldolase is important for the balance of metabolites in the pentose-phosphate pathway. This is Probable transaldolase from Syntrophomonas wolfei subsp. wolfei (strain DSM 2245B / Goettingen).